The sequence spans 190 residues: Ribose 1,5-bisphosphate phosphokinase PhnN (190 aa).

The tract at residues 135–159 is disordered; the sequence is RGREPEPGIGQRLARPDPAPGHQAD.

The protein belongs to the ribose 1,5-bisphosphokinase family.

It carries out the reaction alpha-D-ribose 1,5-bisphosphate + ATP = 5-phospho-alpha-D-ribose 1-diphosphate + ADP. The protein operates within metabolic intermediate biosynthesis; 5-phospho-alpha-D-ribose 1-diphosphate biosynthesis; 5-phospho-alpha-D-ribose 1-diphosphate from D-ribose 5-phosphate (route II): step 3/3. Catalyzes the phosphorylation of ribose 1,5-bisphosphate to 5-phospho-D-ribosyl alpha-1-diphosphate (PRPP). The sequence is that of Ribose 1,5-bisphosphate phosphokinase PhnN from Pseudofrankia inefficax (strain DSM 45817 / CECT 9037 / DDB 130130 / EuI1c) (Frankia inefficax).